Consider the following 576-residue polypeptide: Low-affinity glucose transporter HXT4 (576 aa).

A disordered region spans residues 1-56 (MSEEAAYQEDTAVQNTPADALSPVESDSNSALSTPSNKAERDDMKDFDENHEESNN). Residues 1–66 (MSEEAAYQED…YVEIPKKPAS (66 aa)) lie on the Cytoplasmic side of the membrane. Residues 25–37 (ESDSNSALSTPSN) are compositionally biased toward polar residues. Positions 38 to 54 (KAERDDMKDFDENHEES) are enriched in basic and acidic residues. Residue Lys-45 forms a Glycyl lysine isopeptide (Lys-Gly) (interchain with G-Cter in ubiquitin) linkage. The chain crosses the membrane as a helical span at residues 67-87 (AYVTVSICCLMVAFGGFVFGW). At 88 to 122 (DTGTISGFVAQTDFIRRFGMKHHDGTYYLSKVRTG) the chain is on the extracellular side. A helical transmembrane segment spans residues 123–143 (LMVSIINIGCAIGGIILAKLG). Topologically, residues 144 to 149 (DMYGRK) are cytoplasmic. The helical transmembrane segment at 150–170 (MGLIVVVVIYIIGIIIQIASI) threads the bilayer. Over 171–180 (NKWYQYFIGR) the chain is Extracellular. A helical membrane pass occupies residues 181–201 (IISGLGVGGIAVLSPMLISEV). Residues 202-207 (SPKHIR) lie on the Cytoplasmic side of the membrane. Residues 208–228 (GTLVSCYQLMITLGIFLGYCT) traverse the membrane as a helical segment. Residues 229–242 (NYGTKTYTNSVQWR) are Extracellular-facing. The chain crosses the membrane as a helical span at residues 243–263 (VPLGLGFAWALFMIGGMTFVP). At 264–346 (ESPRYLVEVG…IQSLQQLTGD (83 aa)) the chain is on the cytoplasmic side. A helical membrane pass occupies residues 347-363 (NYFFYYGTTVFTAVGLS). Residues 364-369 (DSFETS) lie on the Extracellular side of the membrane. Residues 370–387 (IVLGIVNFASTFVGIFLV) traverse the membrane as a helical segment. Residues 388 to 394 (ERYGRRR) lie on the Cytoplasmic side of the membrane. The helical transmembrane segment at 395–415 (CLLWGAASMTACMVVFASVGV) threads the bilayer. Residues 416–437 (TRLWPNGKKNGSSKGAGNCMIV) are Extracellular-facing. Asn-425 carries N-linked (GlcNAc...) asparagine glycosylation. Residues 438–458 (FTCFYLFCFATTWAPIPFVVN) traverse the membrane as a helical segment. The Cytoplasmic portion of the chain corresponds to 459 to 475 (SETFPLRVKSKCMAIAQ). A helical transmembrane segment spans residues 476-496 (ACNWIWGFLIGFFTPFISNAI). Residue Asp-497 is a topological domain, extracellular. Residues 498–518 (FYYGYVFMGCLVFSYFYVFFF) traverse the membrane as a helical segment. Residues 519–576 (VPETKGLTLEEVNTLWEEGVLPWKSPSWVPPNKRGTDYNADDLMHDDQPFYKKMFGKK) are Cytoplasmic-facing.

Belongs to the major facilitator superfamily. Sugar transporter (TC 2.A.1.1) family.

The protein resides in the cell membrane. With respect to regulation, xylose uptake is strongly inhibited by glucose. In terms of biological role, low-affinity glucose transporter. Can also transport xylose. This chain is Low-affinity glucose transporter HXT4 (HXT4), found in Saccharomyces cerevisiae (strain JAY291) (Baker's yeast).